An 82-amino-acid chain; its full sequence is Progonadoliberin-3 (82 aa).

An N-terminal signal peptide occupies residues 1–23; that stretch reads MDLSNRTVVQVVVLALVAQVTLS. Pyrrolidone carboxylic acid is present on Gln-24. Position 33 is a glycine amide (Gly-33).

The protein belongs to the GnRH family. As to expression, brain.

The protein localises to the secreted. Its function is as follows. Stimulates the secretion of gonadotropins. The chain is Progonadoliberin-3 (gnrh3) from Oncorhynchus nerka (Sockeye salmon).